The chain runs to 95 residues: Co-chaperonin GroES (95 aa).

Belongs to the GroES chaperonin family. As to quaternary structure, heptamer of 7 subunits arranged in a ring. Interacts with the chaperonin GroEL.

It localises to the cytoplasm. Its function is as follows. Together with the chaperonin GroEL, plays an essential role in assisting protein folding. The GroEL-GroES system forms a nano-cage that allows encapsulation of the non-native substrate proteins and provides a physical environment optimized to promote and accelerate protein folding. GroES binds to the apical surface of the GroEL ring, thereby capping the opening of the GroEL channel. This Aliivibrio salmonicida (strain LFI1238) (Vibrio salmonicida (strain LFI1238)) protein is Co-chaperonin GroES.